We begin with the raw amino-acid sequence, 657 residues long: Broad substrate specificity ATP-binding cassette transporter ABCG2 (657 aa).

Residues 1 to 24 (MSSSNDHVLVPMSQRNNNGLPRTN) form a disordered region. The Cytoplasmic segment spans residues 1-393 (MSSSNDHVLV…SFKNLLGNPQ (393 aa)). Residues 13–24 (SQRNNNGLPRTN) are compositionally biased toward polar residues. The region spanning 48-285 (VKSGFLVRKT…FASAGYHCEP (238 aa)) is the ABC transporter domain. ATP is bound by residues 79–86 (GPTGGGKS), 183–189 (RGISGGE), Glu-210, and His-242. One can recognise an ABC transmembrane type-2 domain in the interval 389-653 (LGNPQASVAQ…TIAYLKLLFL (265 aa)). The helical transmembrane segment at 394-414 (ASVAQLIVTVILGLIIGAIYF) threads the bilayer. The Extracellular segment spans residues 415-428 (DLKYDAAGMQNRAG). A helical transmembrane segment spans residues 429–449 (VLFFLTTNQCFSSVSAVELFV). The Cytoplasmic segment spans residues 450-477 (VEKKLFIHEYISGYYRVSSYFFGKVMSD). A helical transmembrane segment spans residues 478 to 498 (LLPMRFLPSVIFTCVLYFMLG). At 499 to 506 (LKKTVDAF) the chain is on the extracellular side. Residues 507 to 527 (FIMMFTLIMVAYTASSMALAI) traverse the membrane as a helical segment. Residues 528 to 535 (ATGQSVVS) are Cytoplasmic-facing. Residues 536-556 (VATLLMTIAFVFMMLFSGLLV) form a helical membrane-spanning segment. Topologically, residues 557 to 632 (NLRTIGPWLS…LSPWGLWKNH (76 aa)) are extracellular. Cys-592 and Cys-610 are joined by a disulfide. N-linked (GlcNAc...) asparagine glycosylation is found at Asn-596 and Asn-600. The helical transmembrane segment at 633–653 (VALACMIIIFLTIAYLKLLFL) threads the bilayer. Residues 654-657 (KKYS) lie on the Cytoplasmic side of the membrane.

It belongs to the ABC transporter superfamily. ABCG family. Eye pigment precursor importer (TC 3.A.1.204) subfamily. Homodimer; disulfide-linked. The minimal functional unit is a homodimer, but the major oligomeric form in plasma membrane is a homotetramer with possibility of higher order oligomerization up to homododecamers. In terms of processing, N-glycosylated. Glycosylation-deficient ABCG2 is normally expressed and functional. Phosphorylated. Phosphorylation may regulate the localization to the plasma membrane, the homooligomerization and therefore, the activity of the transporter. As to expression, highly expressed in kidney. Lower expression in liver, colon, heart, spleen, and placenta. Expressed in mammary gland. Expressed in intestinal villi and renal proximal tubules, hepatic bile canalicular membranes, and placental labyrinth cells (at protein level).

It is found in the cell membrane. The protein localises to the apical cell membrane. The protein resides in the mitochondrion membrane. The catalysed reaction is ATP + H2O + xenobioticSide 1 = ADP + phosphate + xenobioticSide 2.. It carries out the reaction riboflavin(in) + ATP + H2O = riboflavin(out) + ADP + phosphate + H(+). The enzyme catalyses pheophorbide a(in) + ATP + H2O = pheophorbide a(out) + ADP + phosphate + H(+). It catalyses the reaction urate(in) + ATP + H2O = urate(out) + ADP + phosphate + H(+). The catalysed reaction is indoxyl sulfate(in) + ATP + H2O = indoxyl sulfate(out) + ADP + phosphate + H(+). It carries out the reaction sphing-4-enine 1-phosphate(in) + ATP + H2O = sphing-4-enine 1-phosphate(out) + ADP + phosphate + H(+). The enzyme catalyses estrone 3-sulfate(in) + ATP + H2O = estrone 3-sulfate(out) + ADP + phosphate + H(+). It catalyses the reaction dehydroepiandrosterone 3-sulfate(in) + ATP + H2O = dehydroepiandrosterone 3-sulfate(out) + ADP + phosphate + H(+). The catalysed reaction is 4-methylumbelliferone sulfate(in) + ATP + H2O = 4-methylumbelliferone sulfate(out) + ADP + phosphate + H(+). It carries out the reaction 5,7-dimethyl-2-methylamino-4-(3-pyridylmethyl)-1,3-benzothiazol-6-yl beta-D-glucuronate(in) + ATP + H2O = 5,7-dimethyl-2-methylamino-4-(3-pyridylmethyl)-1,3-benzothiazol-6-yl beta-D-glucuronate(out) + ADP + phosphate + H(+). The enzyme catalyses 4-methylumbelliferone beta-D-glucuronate(in) + ATP + H2O = 4-methylumbelliferone beta-D-glucuronate(out) + ADP + phosphate + H(+). It catalyses the reaction 5,7-dimethyl-2-methylamino-4-(3-pyridylmethyl)-1,3-benzothiazol-6-yl sulfate(in) + ATP + H2O = 5,7-dimethyl-2-methylamino-4-(3-pyridylmethyl)-1,3-benzothiazol-6-yl sulfate(out) + ADP + phosphate + H(+). The catalysed reaction is 17beta-estradiol 17-O-(beta-D-glucuronate)(in) + ATP + H2O = 17beta-estradiol 17-O-(beta-D-glucuronate)(out) + ADP + phosphate + H(+). It carries out the reaction methotrexate(in) + ATP + H2O = methotrexate(out) + ADP + phosphate + H(+). The enzyme catalyses itaconate(in) + ATP + H2O = itaconate(out) + ADP + phosphate + H(+). With respect to regulation, specifically inhibited by the fungal toxin fumitremorgin C and Ko143. Its function is as follows. Broad substrate specificity ATP-dependent transporter of the ATP-binding cassette (ABC) family that actively extrudes a wide variety of physiological compounds, dietary toxins and xenobiotics from cells. Involved in porphyrin homeostasis, mediating the export of protoporphyrin IX (PPIX) from both mitochondria to cytosol and cytosol to extracellular space, it also functions in the cellular export of heme. Also mediates the efflux of sphingosine-1-P from cells. Acts as a urate exporter functioning in both renal and extrarenal urate excretion. In kidney, it also functions as a physiological exporter of the uremic toxin indoxyl sulfate. Also involved in the excretion of steroids like estrone 3-sulfate/E1S, 3beta-sulfooxy-androst-5-en-17-one/DHEAS, and other sulfate conjugates. Mediates the secretion of the riboflavin and biotin vitamins into milk. Extrudes pheophorbide a, a phototoxic porphyrin catabolite of chlorophyll, reducing its bioavailability. Plays an important role in the exclusion of xenobiotics from the brain. It confers to cells a resistance to multiple drugs and other xenobiotics including mitoxantrone, pheophorbide, camptothecin, methotrexate, azidothymidine, and the anthracyclines daunorubicin and doxorubicin, through the control of their efflux. In placenta, it limits the penetration of drugs from the maternal plasma into the fetus. May play a role in early stem cell self-renewal by blocking differentiation. In inflammatory macrophages, exports itaconate from the cytosol to the extracellular compartment and limits the activation of TFEB-dependent lysosome biogenesis involved in antibacterial innate immune response. This Mus musculus (Mouse) protein is Broad substrate specificity ATP-binding cassette transporter ABCG2 (Abcg2).